We begin with the raw amino-acid sequence, 73 residues long: Signaling peptide TAXIMIN 2 (73 aa).

The first 27 residues, methionine 1–alanine 27, serve as a signal peptide directing secretion.

As to expression, confined to the vasculature of various organs, including seedling roots, leaves, cotyledons, sepals and petals. Also accumulates in root hair cells.

It is found in the secreted. Signaling peptide involved in the regulation of lateral organs separation. This is Signaling peptide TAXIMIN 2 from Arabidopsis thaliana (Mouse-ear cress).